Here is a 278-residue protein sequence, read N- to C-terminus: Release factor glutamine methyltransferase (278 aa).

S-adenosyl-L-methionine-binding positions include 117 to 121 (GTGSG), aspartate 140, and asparagine 184. 184-187 (NPPY) provides a ligand contact to substrate.

The protein belongs to the protein N5-glutamine methyltransferase family. PrmC subfamily.

The enzyme catalyses L-glutaminyl-[peptide chain release factor] + S-adenosyl-L-methionine = N(5)-methyl-L-glutaminyl-[peptide chain release factor] + S-adenosyl-L-homocysteine + H(+). Functionally, methylates the class 1 translation termination release factors RF1/PrfA and RF2/PrfB on the glutamine residue of the universally conserved GGQ motif. This Staphylococcus aureus (strain NCTC 8325 / PS 47) protein is Release factor glutamine methyltransferase.